We begin with the raw amino-acid sequence, 461 residues long: UDP-N-acetylmuramate--L-alanine ligase (461 aa).

An ATP-binding site is contributed by 112–118 (GTHGKTT).

Belongs to the MurCDEF family.

The protein resides in the cytoplasm. It catalyses the reaction UDP-N-acetyl-alpha-D-muramate + L-alanine + ATP = UDP-N-acetyl-alpha-D-muramoyl-L-alanine + ADP + phosphate + H(+). Its pathway is cell wall biogenesis; peptidoglycan biosynthesis. Cell wall formation. This Hydrogenovibrio crunogenus (strain DSM 25203 / XCL-2) (Thiomicrospira crunogena) protein is UDP-N-acetylmuramate--L-alanine ligase.